The chain runs to 103 residues: MKSLLLLSILAALAVAALCYESHESLESYEINPFINRRNANSFISPQQRWRAKAQERIRELNKPQYELNREACDDFKLCERYAMVYGYNAAYDRYFRQRRGAK.

The signal sequence occupies residues 1-19 (MKSLLLLSILAALAVAALC). Glutamate 21 is modified (4-carboxyglutamate; partial). Serine 22, serine 25, and serine 28 each carry phosphoserine. The Gla domain maps to 51-97 (RAKAQERIRELNKPQYELNREACDDFKLCERYAMVYGYNAAYDRYFR). Glutamate 56, glutamate 60, glutamate 67, and glutamate 71 each carry 4-carboxyglutamate. The cysteines at positions 73 and 79 are disulfide-linked. The propeptide at 99 to 102 (RRGA) is removed in short form; probably by carboxypeptidase N. Residue lysine 103 is a propeptide, removed in long form; probably by carboxypeptidase H.

It belongs to the osteocalcin/matrix Gla protein family. Requires vitamin K-dependent gamma-carboxylation for its function.

The protein resides in the secreted. Its function is as follows. Associates with the organic matrix of bone and cartilage. Thought to act as an inhibitor of bone formation. This is Matrix Gla protein (MGP) from Bos taurus (Bovine).